Here is a 149-residue protein sequence, read N- to C-terminus: ER export of PMA1 protein 1 (149 aa).

The Lumenal portion of the chain corresponds to 1–6; sequence MNLYGY. The chain crosses the membrane as a helical; Signal-anchor for type II membrane protein span at residues 7–27; it reads FLLLIIVIAFIALLPLFSGIG. Topologically, residues 28–149 are cytoplasmic; that stretch reads TFKLTKPKSS…KKNEAYEGFV (122 aa).

As to quaternary structure, interacts with PMA1 and PSG1.

The protein resides in the endoplasmic reticulum membrane. The protein localises to the cytoplasmic vesicle. Its subcellular location is the COPI-coated vesicle membrane. It localises to the COPII-coated vesicle membrane. It is found in the golgi apparatus membrane. In terms of biological role, specific cargo receptor protein for the plasma membrane ATPase PMA1 that acts with PSG1 to promote the transport and maturation of PMA1. EXP1 and PSG1 probably act sequentially to promote PMA1 sorting between the ER and the Golgi, with EXP1 promoting PMA1 export from the ER to the Golgi while PSG1 has a role in PMA1 maturation or quality control in the Golgi. The chain is ER export of PMA1 protein 1 from Saccharomyces cerevisiae (strain ATCC 204508 / S288c) (Baker's yeast).